A 126-amino-acid chain; its full sequence is Protein ApaG (126 aa).

An ApaG domain is found at 2–126 (KQLESSIRIE…FRLAAPGLLH (125 aa)).

In Shewanella loihica (strain ATCC BAA-1088 / PV-4), this protein is Protein ApaG.